Reading from the N-terminus, the 840-residue chain is Phosphatidylglycerol lysyltransferase (840 aa).

Residues methionine 1–lysine 8 are Cytoplasmic-facing. The helical transmembrane segment at leucine 9–leucine 29 threads the bilayer. Residues tyrosine 30 to tryptophan 52 lie on the Extracellular side of the membrane. The chain crosses the membrane as a helical span at residues leucine 53 to isoleucine 73. The Cytoplasmic portion of the chain corresponds to leucine 74 to arginine 89. A helical membrane pass occupies residues valine 90–glycine 110. The Extracellular portion of the chain corresponds to valine 111 to tyrosine 129. The helical transmembrane segment at isoleucine 130–leucine 150 threads the bilayer. Topologically, residues arginine 151–glutamate 161 are cytoplasmic. Residues isoleucine 162 to tyrosine 182 traverse the membrane as a helical segment. Residues threonine 183–threonine 200 are Extracellular-facing. A helical transmembrane segment spans residues valine 201–valine 221. Residues aspartate 222–threonine 229 are Cytoplasmic-facing. The chain crosses the membrane as a helical span at residues phenylalanine 230–phenylalanine 250. Topologically, residues glycine 251–lysine 270 are extracellular. The chain crosses the membrane as a helical span at residues isoleucine 271 to leucine 291. Topologically, residues isoleucine 292 to serine 337 are cytoplasmic. Residues leucine 338–tyrosine 358 form a helical membrane-spanning segment. The Extracellular portion of the chain corresponds to aspartate 359–histidine 366. A helical membrane pass occupies residues phenylalanine 367–valine 387. Topologically, residues arginine 388–lysine 392 are cytoplasmic. Residues glycine 393 to isoleucine 413 traverse the membrane as a helical segment. The Extracellular segment spans residues tyrosine 414–threonine 415. A helical transmembrane segment spans residues tyrosine 416–tyrosine 436. Residues glutamine 437–lysine 450 are Cytoplasmic-facing. The helical transmembrane segment at leucine 451–glycine 471 threads the bilayer. The Extracellular segment spans residues threonine 472–arginine 489. A helical membrane pass occupies residues tyrosine 490 to phenylalanine 510. Residues aspartate 511–lysine 840 are Cytoplasmic-facing.

It belongs to the LPG synthase family.

The protein resides in the cell membrane. The catalysed reaction is L-lysyl-tRNA(Lys) + a 1,2-diacyl-sn-glycero-3-phospho-(1'-sn-glycerol) = a 1,2-diacyl-sn-glycero-3-phospho-1'-(3'-O-L-lysyl)-sn-glycerol + tRNA(Lys). Its function is as follows. Catalyzes the transfer of a lysyl group from L-lysyl-tRNA(Lys) to membrane-bound phosphatidylglycerol (PG), which produces lysylphosphatidylglycerol (LPG), a major component of the bacterial membrane with a positive net charge. LPG synthesis contributes to bacterial virulence as it is involved in the resistance mechanism against cationic antimicrobial peptides (CAMP) produces by the host's immune system (defensins, cathelicidins) and by the competing microorganisms (bacteriocins). In fact, the modification of anionic phosphatidylglycerol with positively charged L-lysine results in repulsion of the peptides. The chain is Phosphatidylglycerol lysyltransferase (mprF) from Staphylococcus epidermidis (strain ATCC 35984 / DSM 28319 / BCRC 17069 / CCUG 31568 / BM 3577 / RP62A).